A 423-amino-acid chain; its full sequence is Mannose-6-phosphate isomerase (423 aa).

An N-acetylalanine modification is found at Ala2. Phosphoserine is present on residues Ser102 and Ser108. The Zn(2+) site is built by Gln110, His112, Glu137, and His276. Residue Arg295 is part of the active site.

It belongs to the mannose-6-phosphate isomerase type 1 family. Zn(2+) is required as a cofactor. Expressed in all tissues, but more abundant in heart, brain and skeletal muscle.

It is found in the cytoplasm. It carries out the reaction D-mannose 6-phosphate = D-fructose 6-phosphate. It participates in nucleotide-sugar biosynthesis; GDP-alpha-D-mannose biosynthesis; alpha-D-mannose 1-phosphate from D-fructose 6-phosphate: step 1/2. Functionally, isomerase that catalyzes the interconversion of fructose-6-P and mannose-6-P and has a critical role in the supply of D-mannose derivatives required for many eukaryotic glycosylation reactions. This is Mannose-6-phosphate isomerase from Homo sapiens (Human).